The primary structure comprises 50 residues: Small, acid-soluble spore protein P (50 aa).

Positions 1–50 (MSKRKMGPKQQKNPELPKSPEQPYGEPLSGSKKEKKANHSGQKHNPHHGL) are disordered. A compositionally biased stretch (basic residues) spans 33–50 (KEKKANHSGQKHNPHHGL).

This sequence belongs to the SspP family.

The protein resides in the spore core. The protein is Small, acid-soluble spore protein P of Oceanobacillus iheyensis (strain DSM 14371 / CIP 107618 / JCM 11309 / KCTC 3954 / HTE831).